A 532-amino-acid chain; its full sequence is NMDA receptor synaptonuclear signaling and neuronal migration factor (532 aa).

G2 carries N-myristoyl glycine lipidation. Residues 2–235 are necessary and sufficient to elicit dendritic processes and synaptic contacts; that stretch reads GAAASRRRAL…FSFQTATTTM (234 aa). Disordered regions lie at residues 34–67 and 127–174; these read SQSH…APHN and RRQR…GCAK. The span at 38 to 48 shows a compositional bias: basic and acidic residues; sequence PENRNGADHLL. Basic residues predominate over residues 127–139; sequence RRQRERHPHHHSQ. Polar residues predominate over residues 155–164; sequence PCQSWAGSRQ. S206 carries the phosphoserine modification. A Nuclear localization signal motif is present at residues 247-252; that stretch reads RKRRKR. The tract at residues 275–315 is disordered; that stretch reads RVKAQTFAERRERSFSRSWSDPTPMKADTSHDSRDSSDLQS. S292 and S294 each carry phosphoserine. The span at 302-311 shows a compositional bias: basic and acidic residues; the sequence is DTSHDSRDSS.

The protein belongs to the NSMF family. Interacts with KPNA1; the interaction occurs in a calcium-independent manner after synaptic NMDA receptor stimulation and is required for nuclear import of NSMF but is competed by CABP1. Interacts (via the central NLS-containing motif region) with CABP1 (via EF-hands 1 and 2); the interaction occurs in a calcium-dependent manner after synaptic NMDA receptor stimulation and prevents the nuclear import of NSMF. Cannot be competed by calmodulin. Proteolytically processed after NMDA receptor activation. Cleaved in a calcium-dependent and calpain-sensitive manner. Calpain cleavage is essential for the translocation process from dendrites to the nucleus. As to expression, expressed in the radiatum and pyramidale strata of the hippocampus (at protein level). Strongly expressed in the brain. Expressed in the sensory and motor cortex, hippocampus, olfactory bulb, thalamus and amygdala. In the olfactory bulb expressed in the granular cell layer, mitral cell layer and the glomerular layer. In the hippocampus highly expressed in the regions associated with neuronal cell types as CA1, CA2, CA3 and granule cells of the dentate gyrus. All isoforms have been detected in the molecular layers of the hippocampus.

It is found in the nucleus. It localises to the nucleus envelope. The protein resides in the nucleus membrane. The protein localises to the nucleus matrix. Its subcellular location is the cytoplasm. It is found in the cell cortex. It localises to the cytoskeleton. The protein resides in the cell membrane. The protein localises to the cell projection. Its subcellular location is the dendrite. It is found in the synapse. It localises to the synaptosome. The protein resides in the postsynaptic density. The protein localises to the membrane. Functionally, couples NMDA-sensitive glutamate receptor signaling to the nucleus and triggers long-lasting changes in the cytoarchitecture of dendrites and spine synapse processes. Part of the cAMP response element-binding protein (CREB) shut-off signaling pathway. Stimulates outgrowth of olfactory axons and migration of gonadotropin-releasing hormone (GnRH) and luteinizing-hormone-releasing hormone (LHRH) neuronal cells. This is NMDA receptor synaptonuclear signaling and neuronal migration factor (Nsmf) from Rattus norvegicus (Rat).